We begin with the raw amino-acid sequence, 219 residues long: Ribose-5-phosphate isomerase A (219 aa).

Residues 28–31 (TGST), 81–84 (DGAD), and 94–97 (KGGG) each bind substrate. Glu103 acts as the Proton acceptor in catalysis. Lys121 serves as a coordination point for substrate.

The protein belongs to the ribose 5-phosphate isomerase family. In terms of assembly, homodimer.

The enzyme catalyses aldehydo-D-ribose 5-phosphate = D-ribulose 5-phosphate. Its pathway is carbohydrate degradation; pentose phosphate pathway; D-ribose 5-phosphate from D-ribulose 5-phosphate (non-oxidative stage): step 1/1. Functionally, catalyzes the reversible conversion of ribose-5-phosphate to ribulose 5-phosphate. In Photobacterium profundum (strain SS9), this protein is Ribose-5-phosphate isomerase A.